A 694-amino-acid polypeptide reads, in one-letter code: Polyphosphate kinase (694 aa).

Asn-45 provides a ligand contact to ATP. Arg-367 and Arg-397 together coordinate Mg(2+). His-427 (phosphohistidine intermediate) is an active-site residue. 3 residues coordinate ATP: Tyr-460, Arg-553, and His-580.

It belongs to the polyphosphate kinase 1 (PPK1) family. Requires Mg(2+) as cofactor. In terms of processing, an intermediate of this reaction is the autophosphorylated ppk in which a phosphate is covalently linked to a histidine residue through a N-P bond.

It carries out the reaction [phosphate](n) + ATP = [phosphate](n+1) + ADP. In terms of biological role, catalyzes the reversible transfer of the terminal phosphate of ATP to form a long-chain polyphosphate (polyP). The sequence is that of Polyphosphate kinase from Campylobacter jejuni (strain RM1221).